A 229-amino-acid chain; its full sequence is Glycine betaine/carnitine/choline transport system permease protein OpuCD (229 aa).

One can recognise an ABC transmembrane type-1 domain in the interval 22-202 (FYRHFLMSVY…LMAVIADLVM (181 aa)). Transmembrane regions (helical) follow at residues 27–47 (LMSV…GILI), 55–74 (GWVF…AMLA), 78–100 (LVMG…LPII), 148–168 (ALVI…GGLG), and 182–202 (AIIL…DLVM).

The protein belongs to the binding-protein-dependent transport system permease family. CysTW subfamily. As to quaternary structure, the complex is composed of two ATP-binding proteins (OpuCA), two transmembrane proteins (OpuCB and OpuCD) and a solute-binding protein (OpuCC).

It localises to the cell membrane. Its function is as follows. Involved in a high affinity multicomponent binding-protein-dependent transport system for glycine betaine, carnitine and choline; probably responsible for the translocation of the substrate across the membrane. The sequence is that of Glycine betaine/carnitine/choline transport system permease protein OpuCD (opuCD) from Bacillus subtilis (strain 168).